A 42-amino-acid chain; its full sequence is Photosystem I reaction center subunit IX (42 aa).

The helical transmembrane segment at 7–27 threads the bilayer; that stretch reads YLSTAPVLATLWFGFLAGLLI.

This sequence belongs to the PsaJ family.

Its subcellular location is the plastid. It is found in the chloroplast thylakoid membrane. Functionally, may help in the organization of the PsaE and PsaF subunits. This is Photosystem I reaction center subunit IX from Marchantia polymorpha (Common liverwort).